The following is a 319-amino-acid chain: MGTSFFLGNYWLFFSVYLLVFLVGLPLNVMALVVFVGKLRRRPVAVDLLLLNLTISDLLLLLFLPFRMVEAACGMRWLLPFIFCPLSGFLFFTTIYLTSLFLTAVSIERFLSVAYPLWYKTRPRLAQAGLVSVVCWFLASAHCSVVYITEYWGNATYSQGTNGTCYLEFREDQLAILLPVRLEMAVVLFMVPLCITSYCYSRLVWILSRGASRRRRKRIMGLLAATLLIFFVCFGPYNMSHVVGYVSRESPSWRSYVLLLSTLNSCIDPLVFYFSSSKFQADFHQLLGRLLRTCVPWTQQVSLELKVKNGEEPSKECPS.

Topologically, residues 1 to 15 (MGTSFFLGNYWLFFS) are extracellular. The chain crosses the membrane as a helical span at residues 16–36 (VYLLVFLVGLPLNVMALVVFV). Residues 37-43 (GKLRRRP) are Cytoplasmic-facing. A helical membrane pass occupies residues 44 to 64 (VAVDLLLLNLTISDLLLLLFL). Topologically, residues 65–98 (PFRMVEAACGMRWLLPFIFCPLSGFLFFTTIYLT) are extracellular. Cys84 and Cys165 are disulfide-bonded. Residues 99–119 (SLFLTAVSIERFLSVAYPLWY) traverse the membrane as a helical segment. The Cytoplasmic segment spans residues 120–127 (KTRPRLAQ). The chain crosses the membrane as a helical span at residues 128 to 148 (AGLVSVVCWFLASAHCSVVYI). The Extracellular portion of the chain corresponds to 149-183 (TEYWGNATYSQGTNGTCYLEFREDQLAILLPVRLE). Residues Asn154 and Asn162 are each glycosylated (N-linked (GlcNAc...) asparagine). Residues 184 to 206 (MAVVLFMVPLCITSYCYSRLVWI) traverse the membrane as a helical segment. Residues 207–218 (LSRGASRRRRKR) lie on the Cytoplasmic side of the membrane. The helical transmembrane segment at 219 to 239 (IMGLLAATLLIFFVCFGPYNM) threads the bilayer. Over 240-254 (SHVVGYVSRESPSWR) the chain is Extracellular. A helical transmembrane segment spans residues 255–275 (SYVLLLSTLNSCIDPLVFYFS). The Cytoplasmic portion of the chain corresponds to 276–319 (SSKFQADFHQLLGRLLRTCVPWTQQVSLELKVKNGEEPSKECPS).

This sequence belongs to the G-protein coupled receptor 1 family. As to expression, expressed in white adipose tissue and skeletal muscle (at protein level). Abundantly expressed in sympathetic ganglia such as the superior cervical ganglion. Also expressed by intestinal endocrine cells.

The protein localises to the cell membrane. G protein-coupled receptor that is activated by a major product of dietary fiber digestion, the short chain fatty acids (SCFAs), and that plays a role in the regulation of whole-body energy homeostasis and in intestinal immunity. In omnivorous mammals, the short chain fatty acids acetate, propionate and butyrate are produced primarily by the gut microbiome that metabolizes dietary fibers. SCFAs serve as a source of energy but also act as signaling molecules. That G protein-coupled receptor is probably coupled to the pertussis toxin-sensitive, G(i/o)-alpha family of G proteins. Its activation results in the formation of inositol 1,4,5-trisphosphate, the mobilization of intracellular calcium, the phosphorylation of the MAPK3/ERK1 and MAPK1/ERK2 kinases and the inhibition of intracellular cAMP accumulation. Activated by SCFAs and by beta-hydroxybutyrate, a ketone body produced by the liver upon starvation, it inhibits N-type calcium channels and modulates the activity of sympathetic neurons through a signaling cascade involving the beta and gamma subunits of its coupled G protein, phospholipase C and MAP kinases. Thereby, it may regulate energy expenditure through the control of the sympathetic nervous system that controls for instance heart rate. Upon activation by SCFAs accumulating in the intestine, it may also signal to the brain via neural circuits which in turn would regulate intestinal gluconeogenesis. May also control the production of hormones involved in whole-body energy homeostasis. May for instance, regulate blood pressure through renin secretion. May also regulate secretion of the PYY peptide by enteroendocrine cells and control gut motility, intestinal transit rate, and the harvesting of energy from SCFAs produced by gut microbiota. May also indirectly regulate the production of LEP/Leptin, a hormone acting on the CNS to inhibit food intake, in response to the presence of short-chain fatty acids in the intestine. Finally, may also play a role in glucose homeostasis. Besides its role in energy homeostasis, may play a role in intestinal immunity. May mediate the activation of the inflammatory and immune response by SCFAs in the gut, regulating the rapid production of chemokines and cytokines by intestinal epithelial cells. Exhibits an SCFA-independent constitutive G protein-coupled receptor activity. The sequence is that of Free fatty acid receptor 3 (Ffar3) from Mus musculus (Mouse).